We begin with the raw amino-acid sequence, 245 residues long: Probable phosphatase KPN78578_10290 (245 aa).

Residues histidine 7, histidine 9, histidine 15, histidine 40, glutamate 73, histidine 101, histidine 131, aspartate 192, and histidine 194 each coordinate Zn(2+).

This sequence belongs to the PHP family. Homotrimer. Requires Zn(2+) as cofactor.

The protein is Probable phosphatase KPN78578_10290 of Klebsiella pneumoniae subsp. pneumoniae (strain ATCC 700721 / MGH 78578).